Here is a 412-residue protein sequence, read N- to C-terminus: MADTLNHLPEPQKGEDLYRYLLERVTNLEDRNTELREQLRQIEADKRYLETQKVRYEREVRKFKGEIEQMKSPPLVIGTVTDLIDENRVIVRSSAGPRFLVGISQSLNIEEIKPGARCTLNQQSLAIVEILPTNYDAQIYGMEVIEAPSERYEEIGGLEKQINEIREAVELPLKKPEVFRKMGIEPPKGVLLHGPPGTGKTLLARAVAHQTEAHFLRVVGSELVQKYIGEGARLVRELFELAKKKSPSIIFIDEIDAIGASRTESNTSGDREVHRTLMQLLAEMDGFSNRGDVRIIGATNRIDILDRALLRPGRFDRIIEIPAPDIEGRVSILNIHCAGMNIDKKVDIRDIATRTDGKNGADLRSICMEAGMFAIRSDHEMVTLEDFEQSIEKFSNDFERDSLINTSGAMFA.

Residues 15-72 (EDLYRYLLERVTNLEDRNTELREQLRQIEADKRYLETQKVRYEREVRKFKGEIEQMKS) are a coiled coil. Residues 197–202 (GTGKTL) and His-336 each bind ATP. A docks into pockets in the proteasome alpha-ring to cause gate opening region spans residues 410-412 (MFA).

This sequence belongs to the AAA ATPase family. As to quaternary structure, homohexamer. The hexameric complex has a two-ring architecture resembling a top hat that caps the 20S proteasome core at one or both ends. Upon ATP-binding, the C-terminus of PAN interacts with the alpha-rings of the proteasome core by binding to the intersubunit pockets.

It is found in the cytoplasm. Functionally, ATPase which is responsible for recognizing, binding, unfolding and translocation of substrate proteins into the archaeal 20S proteasome core particle. Is essential for opening the gate of the 20S proteasome via an interaction with its C-terminus, thereby allowing substrate entry and access to the site of proteolysis. Thus, the C-termini of the proteasomal ATPase function like a 'key in a lock' to induce gate opening and therefore regulate proteolysis. Unfolding activity requires energy from ATP hydrolysis, whereas ATP binding alone promotes ATPase-20S proteasome association which triggers gate opening, and supports translocation of unfolded substrates. In Methanosphaerula palustris (strain ATCC BAA-1556 / DSM 19958 / E1-9c), this protein is Proteasome-activating nucleotidase.